The following is a 170-amino-acid chain: Adenine phosphoribosyltransferase (170 aa).

This sequence belongs to the purine/pyrimidine phosphoribosyltransferase family. Homodimer.

The protein resides in the cytoplasm. The catalysed reaction is AMP + diphosphate = 5-phospho-alpha-D-ribose 1-diphosphate + adenine. The protein operates within purine metabolism; AMP biosynthesis via salvage pathway; AMP from adenine: step 1/1. Functionally, catalyzes a salvage reaction resulting in the formation of AMP, that is energically less costly than de novo synthesis. In Mycoplasma mycoides subsp. mycoides SC (strain CCUG 32753 / NCTC 10114 / PG1), this protein is Adenine phosphoribosyltransferase.